Consider the following 290-residue polypeptide: Xyloglucan endotransglucosylase/hydrolase protein 3 (290 aa).

An N-terminal signal peptide occupies residues 1–21 (MDYMRIFSVFVVTLWIIRVDA). The GH16 domain occupies 22–220 (RVFGGRGIEK…WSYSPFIAHF (199 aa)). The active-site Nucleophile is the Glu-109. Glu-113 (proton donor) is an active-site residue. Xyloglucan contacts are provided by residues Glu-113, 126-128 (QTN), 136-138 (NRE), 199-200 (DW), and Gly-204. Asn-210 carries N-linked (GlcNAc...) asparagine glycosylation. Disulfide bonds link Cys-228-Cys-240 and Cys-276-Cys-289.

Belongs to the glycosyl hydrolase 16 family. XTH group 1 subfamily. In terms of processing, contains at least one intrachain disulfide bond essential for its enzymatic activity. Predominantly expressed in flower buds.

The protein resides in the secreted. The protein localises to the cell wall. Its subcellular location is the extracellular space. It is found in the apoplast. It catalyses the reaction breaks a beta-(1-&gt;4) bond in the backbone of a xyloglucan and transfers the xyloglucanyl segment on to O-4 of the non-reducing terminal glucose residue of an acceptor, which can be a xyloglucan or an oligosaccharide of xyloglucan.. Catalyzes xyloglucan endohydrolysis (XEH) and/or endotransglycosylation (XET). Cleaves and religates xyloglucan polymers, an essential constituent of the primary cell wall, and thereby participates in cell wall construction of growing tissues. The chain is Xyloglucan endotransglucosylase/hydrolase protein 3 (XTH3) from Arabidopsis thaliana (Mouse-ear cress).